The sequence spans 244 residues: Phosphoadenosine 5'-phosphosulfate reductase (244 aa).

The active-site Nucleophile; cysteine thiosulfonate intermediate is Cys239.

It belongs to the PAPS reductase family. CysH subfamily.

The protein resides in the cytoplasm. It carries out the reaction [thioredoxin]-disulfide + sulfite + adenosine 3',5'-bisphosphate + 2 H(+) = [thioredoxin]-dithiol + 3'-phosphoadenylyl sulfate. It participates in sulfur metabolism; hydrogen sulfide biosynthesis; sulfite from sulfate: step 3/3. Functionally, catalyzes the formation of sulfite from phosphoadenosine 5'-phosphosulfate (PAPS) using thioredoxin as an electron donor. In Pectobacterium carotovorum subsp. carotovorum (strain PC1), this protein is Phosphoadenosine 5'-phosphosulfate reductase.